The primary structure comprises 297 residues: Acetyl-coenzyme A carboxylase carboxyl transferase subunit beta (297 aa).

The CoA carboxyltransferase N-terminal domain occupies 27–296 (LWHKCPSCEA…PEQAREAAAV (270 aa)). The Zn(2+) site is built by cysteine 31, cysteine 34, cysteine 50, and cysteine 53. The C4-type zinc finger occupies 31–53 (CPSCEAVLYRPELEKTLDVCPKC).

Belongs to the AccD/PCCB family. In terms of assembly, acetyl-CoA carboxylase is a heterohexamer composed of biotin carboxyl carrier protein (AccB), biotin carboxylase (AccC) and two subunits each of ACCase subunit alpha (AccA) and ACCase subunit beta (AccD). Zn(2+) is required as a cofactor.

It localises to the cytoplasm. It carries out the reaction N(6)-carboxybiotinyl-L-lysyl-[protein] + acetyl-CoA = N(6)-biotinyl-L-lysyl-[protein] + malonyl-CoA. The protein operates within lipid metabolism; malonyl-CoA biosynthesis; malonyl-CoA from acetyl-CoA: step 1/1. In terms of biological role, component of the acetyl coenzyme A carboxylase (ACC) complex. Biotin carboxylase (BC) catalyzes the carboxylation of biotin on its carrier protein (BCCP) and then the CO(2) group is transferred by the transcarboxylase to acetyl-CoA to form malonyl-CoA. This Pseudomonas putida (strain GB-1) protein is Acetyl-coenzyme A carboxylase carboxyl transferase subunit beta.